The chain runs to 394 residues: Phosphoglycerate kinase (394 aa).

Substrate contacts are provided by residues 21 to 23 (DFN), Arg36, 59 to 62 (HLGR), Arg118, and Arg151. At Ser183 the chain carries Phosphoserine. Positions 201 and 292 each coordinate ATP. Position 299 is a phosphothreonine (Thr299). Residues Glu323 and 350 to 353 (GGDS) contribute to the ATP site.

It belongs to the phosphoglycerate kinase family. In terms of assembly, monomer.

It is found in the cytoplasm. The enzyme catalyses (2R)-3-phosphoglycerate + ATP = (2R)-3-phospho-glyceroyl phosphate + ADP. Its pathway is carbohydrate degradation; glycolysis; pyruvate from D-glyceraldehyde 3-phosphate: step 2/5. In Bacillus mycoides (strain KBAB4) (Bacillus weihenstephanensis), this protein is Phosphoglycerate kinase.